The chain runs to 712 residues: MAGKKGQKKSGLGNHGKNSDMDVEDRLQAVVLTDSYETRFMPLTAVKPRCLLPLANVPLIEYTLEFLAKAGVHEVFLICSSHANQINDYIENSKWNLPWSPFKITTIMSPEARCTGDVMRDLDNRGIITGDFILVSGDVLTNIDFSKMLEFHKKMHLQDKDHISTMCLSKASTYPKTRTIEPAAFVLDKSTSRCIYYQDLPLPSSREKTSIQIDPELLDNVDEFVIRNDLIDCRIDICTSHVPLIFQENFDYQSLRTDFVKGVISSDILGKHIYAYLTDEYAVRVESWQTYDTISQDFLGRWCYPLVLDSNIQDDQTYSYESRHIYKEKDVVLAQSCKIGKCTAIGSGTKIGEGTKIENSVIGRNCQIGENIRIKNSFIWDDCIIGNNSIIDHSLIASNATLGSNVRLNDGCIIGFNVKIDDNMDLDRNTKISASPLKNAGSRMYDNESNEQFDQDLDDQTLAVSIVGDKGVGYIYESEVSDDEDSSTEACKEINTLSNQLDELYLSDDSISSATKKTKKRRTMSVNSIYTDREEIDSEFEDEDFEKEGIATVERAMENNHDLDTALLELNTLRMSMNVTYHEVRIATITALLRRVYHFIATQTLGPKDAVVKVFNQWGLLFKRQAFDEEEYIDLMNIIMEKIVEQSFDKPDLILFSALVSLYDNDIIEEDVIYKWWDNVSTDPRYDEVKKLTVKWVEWLQNADEESSSEEE.

The disordered stretch occupies residues 1-20; that stretch reads MAGKKGQKKSGLGNHGKNSD. Phosphoserine occurs at positions 478, 481, 507, 525, 538, and 707. The W2 domain occupies 539-710; the sequence is EFEDEDFEKE…QNADEESSSE (172 aa).

This sequence belongs to the eIF-2B gamma/epsilon subunits family. In terms of assembly, component of the translation initiation factor 2B (eIF2B) complex which is a heterodecamer of two sets of five different subunits: alpha, beta, gamma, delta and epsilon. Subunits alpha, beta and delta comprise a regulatory subcomplex and subunits epsilon and gamma comprise a catalytic subcomplex. Within the complex, the hexameric regulatory complex resides at the center, with the two heterodimeric catalytic subcomplexes bound on opposite sides.

Its subcellular location is the cytoplasm. The protein resides in the cytosol. Acts as a catalytic component of the translation initiation factor 2B (eIF2B) complex, which catalyzes the exchange of GDP for GTP on eukaryotic initiation factor 2 (eIF2) and is regulated by phosphorylated eIF2. Its guanine nucleotide exchange factor activity is repressed when bound to eIF2 complex phosphorylated on the alpha subunit, thereby limiting the amount of methionyl-initiator methionine tRNA available to the ribosome and consequently global translation is repressed. It activates the synthesis of GCN4 in yeast under amino acid starvation conditions by suppressing the inhibitory effects of multiple AUG codons present in the leader of GCN4 mRNA. It may promote either repression or activation of GCN4 expression depending on amino acid availability. GCD6 and GCD7 repress GCN4 expression at the translational level by ensuring that ribosomes which have translated UORF1 will reinitiate at UORF2, -3, or -4 and thus fail to reach the GCN4 start site. This Saccharomyces cerevisiae (strain ATCC 204508 / S288c) (Baker's yeast) protein is Translation initiation factor eIF2B subunit epsilon (GCD6).